The chain runs to 204 residues: NAD(P)H dehydrogenase (quinone) (204 aa).

A Flavodoxin-like domain is found at 3 to 194 (VLIVFYSMYG…AGARYQGRHV (192 aa)). FMN contacts are provided by residues 9–14 (SMYGHI) and 82–84 (TRF). Tyr-11 provides a ligand contact to NAD(+). Residue Trp-102 participates in substrate binding. His-138 serves as a coordination point for FMN.

The protein belongs to the WrbA family. The cofactor is FMN.

The catalysed reaction is a quinone + NADH + H(+) = a quinol + NAD(+). It carries out the reaction a quinone + NADPH + H(+) = a quinol + NADP(+). The chain is NAD(P)H dehydrogenase (quinone) from Syntrophobacter fumaroxidans (strain DSM 10017 / MPOB).